Here is a 128-residue protein sequence, read N- to C-terminus: Large ribosomal subunit protein bL12 (128 aa).

Belongs to the bacterial ribosomal protein bL12 family. As to quaternary structure, homodimer. Part of the ribosomal stalk of the 50S ribosomal subunit. Forms a multimeric L10(L12)X complex, where L10 forms an elongated spine to which 2 to 4 L12 dimers bind in a sequential fashion. Binds GTP-bound translation factors.

In terms of biological role, forms part of the ribosomal stalk which helps the ribosome interact with GTP-bound translation factors. Is thus essential for accurate translation. The chain is Large ribosomal subunit protein bL12 from Kineococcus radiotolerans (strain ATCC BAA-149 / DSM 14245 / SRS30216).